The following is a 458-amino-acid chain: V-type sodium ATPase subunit B (458 aa).

This sequence belongs to the ATPase alpha/beta chains family.

Its function is as follows. Involved in ATP-driven sodium extrusion. The polypeptide is V-type sodium ATPase subunit B (ntpB) (Enterococcus hirae (strain ATCC 9790 / DSM 20160 / JCM 8729 / LMG 6399 / NBRC 3181 / NCIMB 6459 / NCDO 1258 / NCTC 12367 / WDCM 00089 / R)).